The primary structure comprises 200 residues: Recombination protein RecR (200 aa).

Residues 57-72 (CSHCRTFTENERCEIC) form a C4-type zinc finger. In terms of domain architecture, Toprim spans 81-176 (GLLCVVESPA…KVSRIAHGVP (96 aa)).

The protein belongs to the RecR family.

Functionally, may play a role in DNA repair. It seems to be involved in an RecBC-independent recombinational process of DNA repair. It may act with RecF and RecO. This is Recombination protein RecR from Aeromonas hydrophila subsp. hydrophila (strain ATCC 7966 / DSM 30187 / BCRC 13018 / CCUG 14551 / JCM 1027 / KCTC 2358 / NCIMB 9240 / NCTC 8049).